The chain runs to 185 residues: MVEVGDLKKGMVIMVNGEPHRVVDVSKHHMAMGRGIIRTKLKSVVTGFVKDVNFSSGERVEEANLSFRQAQFLYSDGAHYHFMALDDYEQYILSEEDLQDAKWYLIENLELSLVFLEDKPIGVQLPNVVTLKVVETEPSFKGDTVSGGGKPAVLETGLKINVPFFVETGEFIKVDTRTGEYVERA.

The protein belongs to the elongation factor P family.

It is found in the cytoplasm. The protein operates within protein biosynthesis; polypeptide chain elongation. Functionally, involved in peptide bond synthesis. Stimulates efficient translation and peptide-bond synthesis on native or reconstituted 70S ribosomes in vitro. Probably functions indirectly by altering the affinity of the ribosome for aminoacyl-tRNA, thus increasing their reactivity as acceptors for peptidyl transferase. The polypeptide is Elongation factor P (Pseudothermotoga lettingae (strain ATCC BAA-301 / DSM 14385 / NBRC 107922 / TMO) (Thermotoga lettingae)).